A 133-amino-acid polypeptide reads, in one-letter code: Large ribosomal subunit protein uL14 (133 aa).

This sequence belongs to the universal ribosomal protein uL14 family. As to quaternary structure, part of the 50S ribosomal subunit. Forms a cluster with proteins L3 and L24e, part of which may contact the 16S rRNA in 2 intersubunit bridges.

In terms of biological role, binds to 23S rRNA. Forms part of two intersubunit bridges in the 70S ribosome. The sequence is that of Large ribosomal subunit protein uL14 from Nanoarchaeum equitans (strain Kin4-M).